A 201-amino-acid chain; its full sequence is Recombination protein RecR (201 aa).

A C4-type zinc finger spans residues 57-72; that stretch reads CADCRTFTEQEHCTIC. The 96-residue stretch at 81–176 folds into the Toprim domain; sequence GQICVVESPA…LASRIAHGVP (96 aa).

It belongs to the RecR family.

Functionally, may play a role in DNA repair. It seems to be involved in an RecBC-independent recombinational process of DNA repair. It may act with RecF and RecO. The sequence is that of Recombination protein RecR from Yersinia pestis bv. Antiqua (strain Antiqua).